A 104-amino-acid polypeptide reads, in one-letter code: Ig lambda-1 chain C region (104 aa).

In terms of domain architecture, Ig-like spans 6–99 (PSVTLFPPSS…EENTVEKSLS (94 aa)). The cysteines at positions 27 and 85 are disulfide-linked.

The protein is Ig lambda-1 chain C region of Rattus norvegicus (Rat).